Here is a 377-residue protein sequence, read N- to C-terminus: Dihydroorotate dehydrogenase (quinone) (377 aa).

Residues 82 to 86 (AGFDK) and threonine 106 contribute to the FMN site. Residue lysine 86 participates in substrate binding. 131–135 (NRMGF) is a substrate binding site. FMN contacts are provided by asparagine 159 and asparagine 192. Asparagine 192 is a substrate binding site. The Nucleophile role is filled by serine 195. Residue asparagine 197 participates in substrate binding. Lysine 228 and threonine 256 together coordinate FMN. 257–258 (NT) is a binding site for substrate. FMN-binding positions include glycine 282, glycine 311, and 332–333 (YT).

This sequence belongs to the dihydroorotate dehydrogenase family. Type 2 subfamily. In terms of assembly, monomer. The cofactor is FMN.

The protein localises to the cell membrane. It carries out the reaction (S)-dihydroorotate + a quinone = orotate + a quinol. It functions in the pathway pyrimidine metabolism; UMP biosynthesis via de novo pathway; orotate from (S)-dihydroorotate (quinone route): step 1/1. In terms of biological role, catalyzes the conversion of dihydroorotate to orotate with quinone as electron acceptor. This Corynebacterium efficiens (strain DSM 44549 / YS-314 / AJ 12310 / JCM 11189 / NBRC 100395) protein is Dihydroorotate dehydrogenase (quinone).